The chain runs to 166 residues: UPF0178 protein BPUM_2255 (166 aa).

It belongs to the UPF0178 family.

This is UPF0178 protein BPUM_2255 from Bacillus pumilus (strain SAFR-032).